A 90-amino-acid chain; its full sequence is Small ribosomal subunit protein uS15c (90 aa).

It belongs to the universal ribosomal protein uS15 family. In terms of assembly, part of the 30S ribosomal subunit.

It localises to the plastid. The protein localises to the chloroplast. The protein is Small ribosomal subunit protein uS15c (rps15) of Drimys granadensis.